A 185-amino-acid polypeptide reads, in one-letter code: Ribosome-recycling factor (185 aa).

The tract at residues 135–159 is disordered; it reads ANDEVKKLEKDKAITEDESKKGQDE.

Belongs to the RRF family.

Its subcellular location is the cytoplasm. Responsible for the release of ribosomes from messenger RNA at the termination of protein biosynthesis. May increase the efficiency of translation by recycling ribosomes from one round of translation to another. This is Ribosome-recycling factor from Campylobacter curvus (strain 525.92).